The sequence spans 61 residues: Large ribosomal subunit protein uL30 (61 aa).

This sequence belongs to the universal ribosomal protein uL30 family. Part of the 50S ribosomal subunit.

The sequence is that of Large ribosomal subunit protein uL30 from Marinomonas sp. (strain MWYL1).